A 307-amino-acid polypeptide reads, in one-letter code: Hepatitis A virus cellular receptor 1 homolog (307 aa).

Positions 1–21 (MVQLQVFISGLLLLLPGSVDS) are cleaved as a signal peptide. Residues 22-124 (YEVVKGVVGH…WFNDQKMTFS (103 aa)) enclose the Ig-like V-type domain. The Extracellular portion of the chain corresponds to 22–235 (YEVVKGVVGH…RKPQRNPTKG (214 aa)). Cystine bridges form between C37-C108, C49-C60, and C55-C107. Positions 129 to 177 (PEIPTSPPTRPTTTRPTTTRPTTISTRSTHVPTSTRVSTSTPTPEQTQT) are disordered. Over residues 139 to 175 (PTTTRPTTTRPTTISTRSTHVPTSTRVSTSTPTPEQT) the composition is skewed to low complexity. N-linked (GlcNAc...) asparagine glycosylation occurs at N206. The helical transmembrane segment at 236–256 (FYVGMSVAALLLLLLASTVVV) threads the bilayer. Topologically, residues 257-307 (TRYIIIRKKMGSLSFVAFHVSKSRALQNAAIVHPRAEDNIYIIEDRSRGAE) are cytoplasmic.

This sequence belongs to the immunoglobulin superfamily. TIM family. In terms of assembly, interacts with STAM. Interacts with SELPLG. In terms of tissue distribution, expressed at a low level in normal kidney but are increased dramatically in postischemic kidney. Expressed in proliferating bromodeoxyuridine-positive and dedifferentiated vimentin-positive epithelial cells in regenerating proximal tubules.

It localises to the cell membrane. In terms of biological role, phosphatidylserine receptor that plays an important functional role in regulatory B-cells homeostasis including generation, expansion and suppressor functions. As P-selectin/SELPLG ligand, plays a specialized role in activated but not naive T-cell trafficking during inflammatory responses. Controls thereby T-cell accumulation in the inflamed central nervous system (CNS) and the induction of autoimmune disease. Also regulates expression of various anti-inflammatory cytokines and co-inhibitory ligands including IL10. Acts as a regulator of T-cell proliferation. May play a role in kidney injury and repair. The sequence is that of Hepatitis A virus cellular receptor 1 homolog (Havcr1) from Rattus norvegicus (Rat).